The following is a 426-amino-acid chain: 3-phosphoshikimate 1-carboxyvinyltransferase (426 aa).

The 3-phosphoshikimate site is built by Lys22, Ser23, and Arg27. Residue Lys22 coordinates phosphoenolpyruvate. Gly96 and Arg124 together coordinate phosphoenolpyruvate. The 3-phosphoshikimate site is built by Ser170, Ser171, Gln172, Ser198, Asp314, Asn337, and Lys341. A phosphoenolpyruvate-binding site is contributed by Gln172. Asp314 functions as the Proton acceptor in the catalytic mechanism. Positions 345, 387, and 412 each coordinate phosphoenolpyruvate.

The protein belongs to the EPSP synthase family. In terms of assembly, monomer.

It localises to the cytoplasm. It carries out the reaction 3-phosphoshikimate + phosphoenolpyruvate = 5-O-(1-carboxyvinyl)-3-phosphoshikimate + phosphate. Its pathway is metabolic intermediate biosynthesis; chorismate biosynthesis; chorismate from D-erythrose 4-phosphate and phosphoenolpyruvate: step 6/7. Functionally, catalyzes the transfer of the enolpyruvyl moiety of phosphoenolpyruvate (PEP) to the 5-hydroxyl of shikimate-3-phosphate (S3P) to produce enolpyruvyl shikimate-3-phosphate and inorganic phosphate. This chain is 3-phosphoshikimate 1-carboxyvinyltransferase, found in Shewanella piezotolerans (strain WP3 / JCM 13877).